Here is a 265-residue protein sequence, read N- to C-terminus: Tryptophan synthase alpha chain (265 aa).

Active-site proton acceptor residues include glutamate 49 and aspartate 60.

The protein belongs to the TrpA family. Tetramer of two alpha and two beta chains.

The catalysed reaction is (1S,2R)-1-C-(indol-3-yl)glycerol 3-phosphate + L-serine = D-glyceraldehyde 3-phosphate + L-tryptophan + H2O. It functions in the pathway amino-acid biosynthesis; L-tryptophan biosynthesis; L-tryptophan from chorismate: step 5/5. Functionally, the alpha subunit is responsible for the aldol cleavage of indoleglycerol phosphate to indole and glyceraldehyde 3-phosphate. This is Tryptophan synthase alpha chain from Ralstonia nicotianae (strain ATCC BAA-1114 / GMI1000) (Ralstonia solanacearum).